The chain runs to 972 residues: SWI/SNF-related matrix-associated actin-dependent regulator of chromatin subfamily A containing DEAD/H box 1A (972 aa).

Disordered stretches follow at residues 15–76 (NAVG…SDLQ), 125–177 (DEDS…EKQE), and 217–333 (SSTD…EDSI). 2 stretches are compositionally biased toward basic and acidic residues: residues 22-42 (KSPD…RKAD) and 63-72 (EVVRMGKDSA). Positions 82–127 (DMEDKIIKLLEIFPQKSKKDLLEVIENTSTLDGAVAHCLMIYGDED) constitute a CUE 1 domain. Residues 128 to 138 (SGGRKDKGGRS) show a composition bias toward basic and acidic residues. Over residues 156–169 (SESEDEDSEDEESE) the composition is skewed to acidic residues. Residues 175–218 (KQEALLKKLKRKLPDIEKEVLRDILKEHDWDYENALGSLLVFSS) form the CUE 2 domain. A compositionally biased stretch (basic and acidic residues) spans 237 to 246 (HSKEKTDKIT). A compositionally biased stretch (polar residues) spans 247–263 (QRPSGSSSLSRWLTAAS). Low complexity predominate over residues 279 to 290 (KSALSKSTSKNS). Residues 307–332 (ASEDEDEIDSDVDSMSDDQDSEDEDS) are compositionally biased toward acidic residues. In terms of domain architecture, Helicase ATP-binding spans 460-628 (ILLHQHKLSG…MSLLNFIMPS (169 aa)). 473-480 (DEMGLGKT) is an ATP binding site. Residues 579–582 (DEGH) carry the DEGH box motif. The Helicase C-terminal domain maps to 805–966 (LLTKTLAKLK…AITEQMAELL (162 aa)).

Belongs to the SNF2/RAD54 helicase family.

It localises to the nucleus. Its subcellular location is the chromosome. The catalysed reaction is ATP + H2O = ADP + phosphate + H(+). In terms of biological role, DNA helicase that possesses intrinsic ATP-dependent nucleosome-remodeling activity and is both required for DNA repair and heterochromatin organization. Promotes DNA end resection of double-strand breaks (DSBs) following DNA damage: probably acts by weakening histone DNA interactions in nucleosomes flanking DSBs. Required for the restoration of heterochromatin organization after replication. The polypeptide is SWI/SNF-related matrix-associated actin-dependent regulator of chromatin subfamily A containing DEAD/H box 1A (smarcad1a) (Danio rerio (Zebrafish)).